A 320-amino-acid polypeptide reads, in one-letter code: Ribose-phosphate pyrophosphokinase (320 aa).

Residues 43–45 (DGE) and 102–103 (RQ) each bind ATP. Residues His-136 and Asp-178 each contribute to the Mg(2+) site. Residue Lys-201 is part of the active site. D-ribose 5-phosphate-binding positions include Arg-203, Asp-227, and 231-235 (DTAGT).

It belongs to the ribose-phosphate pyrophosphokinase family. Class I subfamily. As to quaternary structure, homohexamer. The cofactor is Mg(2+).

The protein localises to the cytoplasm. The enzyme catalyses D-ribose 5-phosphate + ATP = 5-phospho-alpha-D-ribose 1-diphosphate + AMP + H(+). It functions in the pathway metabolic intermediate biosynthesis; 5-phospho-alpha-D-ribose 1-diphosphate biosynthesis; 5-phospho-alpha-D-ribose 1-diphosphate from D-ribose 5-phosphate (route I): step 1/1. Involved in the biosynthesis of the central metabolite phospho-alpha-D-ribosyl-1-pyrophosphate (PRPP) via the transfer of pyrophosphoryl group from ATP to 1-hydroxyl of ribose-5-phosphate (Rib-5-P). The protein is Ribose-phosphate pyrophosphokinase of Clostridium tetani (strain Massachusetts / E88).